The following is a 202-amino-acid chain: Holliday junction branch migration complex subunit RuvA (202 aa).

The tract at residues 1 to 64 (MIGRLRGSLA…EDAHLLYGFY (64 aa)) is domain I. The interval 65–143 (EKRERELFRE…AWESLPGTFT (79 aa)) is domain II. The segment at 144–153 (LVSNGPNQAE) is flexible linker. Residues 154 to 202 (PVASAESDAVSALISLGYKPQEASKAVSAIKEKDLSSADLIRRALKGMG) form a domain III region.

It belongs to the RuvA family. As to quaternary structure, homotetramer. Forms an RuvA(8)-RuvB(12)-Holliday junction (HJ) complex. HJ DNA is sandwiched between 2 RuvA tetramers; dsDNA enters through RuvA and exits via RuvB. An RuvB hexamer assembles on each DNA strand where it exits the tetramer. Each RuvB hexamer is contacted by two RuvA subunits (via domain III) on 2 adjacent RuvB subunits; this complex drives branch migration. In the full resolvosome a probable DNA-RuvA(4)-RuvB(12)-RuvC(2) complex forms which resolves the HJ.

Its subcellular location is the cytoplasm. Its function is as follows. The RuvA-RuvB-RuvC complex processes Holliday junction (HJ) DNA during genetic recombination and DNA repair, while the RuvA-RuvB complex plays an important role in the rescue of blocked DNA replication forks via replication fork reversal (RFR). RuvA specifically binds to HJ cruciform DNA, conferring on it an open structure. The RuvB hexamer acts as an ATP-dependent pump, pulling dsDNA into and through the RuvAB complex. HJ branch migration allows RuvC to scan DNA until it finds its consensus sequence, where it cleaves and resolves the cruciform DNA. In Pseudomonas savastanoi pv. phaseolicola (strain 1448A / Race 6) (Pseudomonas syringae pv. phaseolicola (strain 1448A / Race 6)), this protein is Holliday junction branch migration complex subunit RuvA.